We begin with the raw amino-acid sequence, 478 residues long: Cytochrome c-552 (478 aa).

The signal sequence occupies residues 1 to 26 (MTRIKINARRIFSLLIPFFFFTSVHA). His94 provides a ligand contact to heme c. Cys122, Cys125, and Lys126 together coordinate heme. Cys160, Cys163, His164, Cys209, Cys212, and His213 together coordinate heme c. Residues Glu215, Tyr216, Lys261, and Gln263 each coordinate Ca(2+). Tyr216 is a substrate binding site. Residue His264 participates in substrate binding. Positions 275, 282, 285, 286, 301, 314, 317, 318, and 393 each coordinate heme c.

Belongs to the cytochrome c-552 family. Ca(2+) serves as cofactor. It depends on heme c as a cofactor.

Its subcellular location is the periplasm. It catalyses the reaction 6 Fe(III)-[cytochrome c] + NH4(+) + 2 H2O = 6 Fe(II)-[cytochrome c] + nitrite + 8 H(+). The protein operates within nitrogen metabolism; nitrate reduction (assimilation). In terms of biological role, catalyzes the reduction of nitrite to ammonia, consuming six electrons in the process. This is Cytochrome c-552 from Escherichia coli O157:H7 (strain EC4115 / EHEC).